The chain runs to 195 residues: MIGRGVCCRSFHTAGSAWKQFGFPKTQVTTIYNKTKSASNYKGYLKHRDAPGMYYQPSESIATGSVNSETIPRSFMAASDPRRGLDMPVQSTKAKQCPNVLVGKSTVNGKTYHLGPQEIDEIRKLRLDNPQKYTRKFLAAKYGISPLFVSMVSKPSEQHVQIMESRLQEIQSRWKEKRRIAREDRKRRKLLWYQA.

The transit peptide at 1–18 (MIGRGVCCRSFHTAGSAW) directs the protein to the mitochondrion.

Belongs to the mitochondrion-specific ribosomal protein mL58 family. Component of the mitochondrial large ribosomal subunit (mt-LSU). Mature yeast 74S mitochondrial ribosomes consist of a small (37S) and a large (54S) subunit. The 37S small subunit contains a 15S ribosomal RNA (15S mt-rRNA) and 34 different proteins. The 54S large subunit contains a 21S rRNA (21S mt-rRNA) and 46 different proteins.

The protein localises to the mitochondrion. In terms of biological role, component of the mitochondrial ribosome (mitoribosome), a dedicated translation machinery responsible for the synthesis of mitochondrial genome-encoded proteins, including at least some of the essential transmembrane subunits of the mitochondrial respiratory chain. The mitoribosomes are attached to the mitochondrial inner membrane and translation products are cotranslationally integrated into the membrane. The polypeptide is Large ribosomal subunit protein mL58 (MRPL20) (Saccharomyces cerevisiae (strain ATCC 204508 / S288c) (Baker's yeast)).